A 272-amino-acid polypeptide reads, in one-letter code: Glutamate racemase (272 aa).

Substrate-binding positions include 10 to 11 and 42 to 43; these read DS and YG. Cys-74 acts as the Proton donor/acceptor in catalysis. 75–76 provides a ligand contact to substrate; the sequence is NT. Residue Cys-185 is the Proton donor/acceptor of the active site. 186 to 187 is a binding site for substrate; it reads TH.

It belongs to the aspartate/glutamate racemases family.

The enzyme catalyses L-glutamate = D-glutamate. The protein operates within cell wall biogenesis; peptidoglycan biosynthesis. In terms of biological role, provides the (R)-glutamate required for cell wall biosynthesis. In Bacillus velezensis (strain DSM 23117 / BGSC 10A6 / LMG 26770 / FZB42) (Bacillus amyloliquefaciens subsp. plantarum), this protein is Glutamate racemase.